The primary structure comprises 356 residues: S-adenosylmethionine:tRNA ribosyltransferase-isomerase (356 aa).

It belongs to the QueA family. As to quaternary structure, monomer.

Its subcellular location is the cytoplasm. The enzyme catalyses 7-aminomethyl-7-carbaguanosine(34) in tRNA + S-adenosyl-L-methionine = epoxyqueuosine(34) in tRNA + adenine + L-methionine + 2 H(+). Its pathway is tRNA modification; tRNA-queuosine biosynthesis. Its function is as follows. Transfers and isomerizes the ribose moiety from AdoMet to the 7-aminomethyl group of 7-deazaguanine (preQ1-tRNA) to give epoxyqueuosine (oQ-tRNA). The protein is S-adenosylmethionine:tRNA ribosyltransferase-isomerase of Escherichia coli O1:K1 / APEC.